A 1004-amino-acid polypeptide reads, in one-letter code: 2-oxoglutarate dehydrogenase E1 component (1004 aa).

The protein belongs to the alpha-ketoglutarate dehydrogenase family. As to quaternary structure, homodimer. Part of the 2-oxoglutarate dehydrogenase (OGDH) complex composed of E1 (2-oxoglutarate dehydrogenase), E2 (dihydrolipoamide succinyltransferase) and E3 (dihydrolipoamide dehydrogenase); the complex contains multiple copies of the three enzymatic components (E1, E2 and E3). Thiamine diphosphate is required as a cofactor.

The enzyme catalyses N(6)-[(R)-lipoyl]-L-lysyl-[protein] + 2-oxoglutarate + H(+) = N(6)-[(R)-S(8)-succinyldihydrolipoyl]-L-lysyl-[protein] + CO2. Functionally, E1 component of the 2-oxoglutarate dehydrogenase (OGDH) complex which catalyzes the decarboxylation of 2-oxoglutarate, the first step in the conversion of 2-oxoglutarate to succinyl-CoA and CO(2). The chain is 2-oxoglutarate dehydrogenase E1 component from Brucella canis (strain ATCC 23365 / NCTC 10854 / RM-666).